Consider the following 391-residue polypeptide: Putative penicillin-binding protein PbpX (391 aa).

The helical transmembrane segment at 21 to 40 (GKLLFGLLAVMVCITIWNAL) threads the bilayer. The interval 44-76 (SEENEPSQETAAVSNTDQKKEVKKKTAKKSEEQ) is disordered. Polar residues predominate over residues 50–59 (SQETAAVSNT).

The protein belongs to the beta-lactamase family.

It is found in the cell membrane. The chain is Putative penicillin-binding protein PbpX (pbpX) from Bacillus subtilis (strain 168).